The following is a 169-amino-acid chain: uncharacterized protein (169 aa).

The next 2 helical transmembrane spans lie at N10–I30 and I149–P169.

It localises to the membrane. This is an uncharacterized protein from Dictyostelium discoideum (Social amoeba).